We begin with the raw amino-acid sequence, 150 residues long: Lipoprotein signal peptidase (150 aa).

The next 2 helical transmembrane spans lie at 59-79 (VFVGVTVLVAIIILAAYRYLP) and 84-101 (LLRLSLALMLGGALGNLI). Active-site residues include Asp111 and Asp125. Residues 117 to 137 (IWPVFNLADMAIVFGVIILCW) form a helical membrane-spanning segment.

This sequence belongs to the peptidase A8 family.

The protein resides in the cell membrane. It catalyses the reaction Release of signal peptides from bacterial membrane prolipoproteins. Hydrolyzes -Xaa-Yaa-Zaa-|-(S,diacylglyceryl)Cys-, in which Xaa is hydrophobic (preferably Leu), and Yaa (Ala or Ser) and Zaa (Gly or Ala) have small, neutral side chains.. It participates in protein modification; lipoprotein biosynthesis (signal peptide cleavage). Its function is as follows. This protein specifically catalyzes the removal of signal peptides from prolipoproteins. This chain is Lipoprotein signal peptidase, found in Moorella thermoacetica (strain ATCC 39073 / JCM 9320).